Reading from the N-terminus, the 130-residue chain is Protein ApaG (130 aa).

One can recognise an ApaG domain in the interval 3–127 (SAVTRGIEVT…FSLDVPEQRR (125 aa)).

This Brucella suis biovar 1 (strain 1330) protein is Protein ApaG.